Here is a 298-residue protein sequence, read N- to C-terminus: ATP phosphoribosyltransferase (298 aa).

Belongs to the ATP phosphoribosyltransferase family. Long subfamily. The cofactor is Mg(2+).

Its subcellular location is the cytoplasm. It catalyses the reaction 1-(5-phospho-beta-D-ribosyl)-ATP + diphosphate = 5-phospho-alpha-D-ribose 1-diphosphate + ATP. Its pathway is amino-acid biosynthesis; L-histidine biosynthesis; L-histidine from 5-phospho-alpha-D-ribose 1-diphosphate: step 1/9. Its activity is regulated as follows. Feedback inhibited by histidine. In terms of biological role, catalyzes the condensation of ATP and 5-phosphoribose 1-diphosphate to form N'-(5'-phosphoribosyl)-ATP (PR-ATP). Has a crucial role in the pathway because the rate of histidine biosynthesis seems to be controlled primarily by regulation of HisG enzymatic activity. This chain is ATP phosphoribosyltransferase, found in Vibrio parahaemolyticus serotype O3:K6 (strain RIMD 2210633).